The primary structure comprises 154 residues: Ribosome maturation factor RimP (154 aa).

It belongs to the RimP family.

Its subcellular location is the cytoplasm. Its function is as follows. Required for maturation of 30S ribosomal subunits. This Carboxydothermus hydrogenoformans (strain ATCC BAA-161 / DSM 6008 / Z-2901) protein is Ribosome maturation factor RimP.